Reading from the N-terminus, the 125-residue chain is UPF0734 protein DDB_G0273871/DDB_G0273177 (125 aa).

Belongs to the UPF0734 family.

This Dictyostelium discoideum (Social amoeba) protein is UPF0734 protein DDB_G0273871/DDB_G0273177.